A 390-amino-acid chain; its full sequence is Galactokinase (390 aa).

34–37 is a binding site for substrate; the sequence is EHTD. Residues Ser68 and 122–128 contribute to the ATP site; that span reads GSGLSSS. 2 residues coordinate Mg(2+): Ser128 and Glu160. The active-site Proton acceptor is the Asp172. Tyr221 is a binding site for substrate.

It belongs to the GHMP kinase family. GalK subfamily.

It localises to the cytoplasm. The catalysed reaction is alpha-D-galactose + ATP = alpha-D-galactose 1-phosphate + ADP + H(+). It participates in carbohydrate metabolism; galactose metabolism. Its function is as follows. Catalyzes the transfer of the gamma-phosphate of ATP to D-galactose to form alpha-D-galactose-1-phosphate (Gal-1-P). The sequence is that of Galactokinase from Chloroflexus aggregans (strain MD-66 / DSM 9485).